We begin with the raw amino-acid sequence, 704 residues long: Elongation factor G (704 aa).

In terms of domain architecture, tr-type G spans 8–290 (ARYRNIGISA…AVIDYLPSPV (283 aa)). GTP is bound by residues 17–24 (AHIDAGKT), 88–92 (DTPGH), and 142–145 (NKMD).

Belongs to the TRAFAC class translation factor GTPase superfamily. Classic translation factor GTPase family. EF-G/EF-2 subfamily.

Its subcellular location is the cytoplasm. Its function is as follows. Catalyzes the GTP-dependent ribosomal translocation step during translation elongation. During this step, the ribosome changes from the pre-translocational (PRE) to the post-translocational (POST) state as the newly formed A-site-bound peptidyl-tRNA and P-site-bound deacylated tRNA move to the P and E sites, respectively. Catalyzes the coordinated movement of the two tRNA molecules, the mRNA and conformational changes in the ribosome. This chain is Elongation factor G, found in Salmonella agona (strain SL483).